A 459-amino-acid polypeptide reads, in one-letter code: GTPase Der (459 aa).

EngA-type G domains are found at residues 3 to 167 and 188 to 363; these read FTFA…PEPE and IRVA…AVWN. Residues 9–16, 56–60, 119–122, 194–201, 241–245, and 306–309 contribute to the GTP site; these read GRPNVGKS, DTAGL, NKSE, GRPNAGKS, and NKWD. One can recognise a KH-like domain in the interval 364–448; that stretch reads TRVSTAALNR…PVRITLREKA (85 aa).

This sequence belongs to the TRAFAC class TrmE-Era-EngA-EngB-Septin-like GTPase superfamily. EngA (Der) GTPase family. In terms of assembly, associates with the 50S ribosomal subunit.

Functionally, GTPase that plays an essential role in the late steps of ribosome biogenesis. This is GTPase Der from Rhodopseudomonas palustris (strain HaA2).